Consider the following 552-residue polypeptide: MISKINGKLFADMIIQGAQNLSNNADLVDSLNVYPVPDGDTGTNMNLTITSGREEVENNLSQNIGELGKTFSKGLLMGARGNSGVILSQLFRGFCKNIEEEKEISVQQFAESFQAGVETAYKAVMKPVEGTILTVAKDAAKAAMDYVDQAEDCVDLMAHLIEAASESLDNTPNLLAVLKEVGVVDSGGKGLLCVYEGFLKGLKGEKIEAQAPKLDTESFVNDDHDFHGVINTEDIVYGYCTEMMVRFGKNKKAFDEQEFRNDMSEFGDSLLVINDDEIVKVHVHTEHPGDVFNYGQKYGELIKLKVENMREQHREVIRKEQDGLQNKEANESKTVETAIVTISVGDGIAELFKSMGATHIISGGQTMNPSTEDIVKVIEQSQCKRAIILPNNKNIMMASEQAASIVEAETVVIPTKSIPQGISALFQYDLESSLEDNKRHMSDALETVQSGSITFAVRDTKIDGIEIKKDEFMGLAEDKIVTSDVNQFHAVKGLLSKLLNEDSEILTMISGEDADNSITNQIINWIESEYPDVEVEQHEGGQPIYQYFFAVE.

Positions 8–200 (KLFADMIIQG…LLCVYEGFLK (193 aa)) constitute a DhaL domain.

This is an uncharacterized protein from Staphylococcus epidermidis (strain ATCC 12228 / FDA PCI 1200).